The following is a 510-amino-acid chain: ATP synthase subunit alpha (510 aa).

171–178 (GDRQTGKT) provides a ligand contact to ATP.

This sequence belongs to the ATPase alpha/beta chains family. As to quaternary structure, F-type ATPases have 2 components, CF(1) - the catalytic core - and CF(0) - the membrane proton channel. CF(1) has five subunits: alpha(3), beta(3), gamma(1), delta(1), epsilon(1). CF(0) has three main subunits: a(1), b(2) and c(9-12). The alpha and beta chains form an alternating ring which encloses part of the gamma chain. CF(1) is attached to CF(0) by a central stalk formed by the gamma and epsilon chains, while a peripheral stalk is formed by the delta and b chains.

The protein resides in the cell inner membrane. It carries out the reaction ATP + H2O + 4 H(+)(in) = ADP + phosphate + 5 H(+)(out). Functionally, produces ATP from ADP in the presence of a proton gradient across the membrane. The alpha chain is a regulatory subunit. This Phenylobacterium zucineum (strain HLK1) protein is ATP synthase subunit alpha.